We begin with the raw amino-acid sequence, 409 residues long: Ribose-phosphate pyrophosphokinase 3, chloroplastic (409 aa).

Low complexity-rich tracts occupy residues 1 to 16 (MATA…PAAA) and 34 to 43 (PASAFARPSP). Residues 1 to 43 (MATAASASASASPAAAFGAKTRRPGPSPSPSPSPASAFARPSP) are disordered. The N-terminal 44 residues, 1–44 (MATAASASASASPAAAFGAKTRRPGPSPSPSPSPASAFARPSPR), are a transit peptide targeting the chloroplast. The Mg(2+) site is built by Asp-229 and His-231. Residues 312-327 (GRHVVIVDDLVQSGGT) form a binding of phosphoribosylpyrophosphate region.

It belongs to the ribose-phosphate pyrophosphokinase family. The cofactor is Mg(2+).

It localises to the plastid. It is found in the chloroplast. It carries out the reaction D-ribose 5-phosphate + ATP = 5-phospho-alpha-D-ribose 1-diphosphate + AMP + H(+). The sequence is that of Ribose-phosphate pyrophosphokinase 3, chloroplastic from Oryza sativa subsp. japonica (Rice).